Reading from the N-terminus, the 174-residue chain is MRSLPMFWRMAEEMARMPRLSSPFHAFFHEPPVWSVALPRNWQQIARWQEQEFAPPATVNKDGYKLTLDVKDYSELKVKVLDESVVLVEGKSEQQEAEQGGYSSRHFLRRFVLPEGYEADKVTSTLSSDGVLTISVPNPPGVQETLKEREVTIEQTGEPAKKSAEEPNDKAASQ.

In terms of domain architecture, sHSP spans 44-154 (QIARWQEQEF…TLKEREVTIE (111 aa)). Position 152 is a phosphothreonine (threonine 152). The interval 152–174 (TIEQTGEPAKKSAEEPNDKAASQ) is disordered. Basic and acidic residues predominate over residues 159 to 174 (PAKKSAEEPNDKAASQ).

This sequence belongs to the small heat shock protein (HSP20) family.

In Drosophila melanogaster (Fruit fly), this protein is Heat shock protein 22 (Hsp22).